Reading from the N-terminus, the 264-residue chain is DNA-directed RNA polymerase subunit Rpo3 (264 aa).

[3Fe-4S] cluster contacts are provided by C203, C206, and C209.

Belongs to the archaeal Rpo3/eukaryotic RPB3 RNA polymerase subunit family. In terms of assembly, part of the RNA polymerase complex. [3Fe-4S] cluster is required as a cofactor.

The protein resides in the cytoplasm. The catalysed reaction is RNA(n) + a ribonucleoside 5'-triphosphate = RNA(n+1) + diphosphate. DNA-dependent RNA polymerase (RNAP) catalyzes the transcription of DNA into RNA using the four ribonucleoside triphosphates as substrates. This is DNA-directed RNA polymerase subunit Rpo3 from Archaeoglobus fulgidus (strain ATCC 49558 / DSM 4304 / JCM 9628 / NBRC 100126 / VC-16).